We begin with the raw amino-acid sequence, 66 residues long: Photosystem II reaction center protein J (66 aa).

The disordered stretch occupies residues 1–27 (MSGKKSGLPDGRVPDRNPDGTPAVPWK). A helical transmembrane segment spans residues 37 to 57 (LWLVATAGGMAVMFVVGLFFY).

This sequence belongs to the PsbJ family. PSII is composed of 1 copy each of membrane proteins PsbA, PsbB, PsbC, PsbD, PsbE, PsbF, PsbH, PsbI, PsbJ, PsbK, PsbL, PsbM, PsbT, PsbX, PsbY, PsbZ, Psb30/Ycf12, peripheral proteins PsbO, CyanoQ (PsbQ), PsbU, PsbV and a large number of cofactors. It forms dimeric complexes.

The protein resides in the cellular thylakoid membrane. Its function is as follows. One of the components of the core complex of photosystem II (PSII). PSII is a light-driven water:plastoquinone oxidoreductase that uses light energy to abstract electrons from H(2)O, generating O(2) and a proton gradient subsequently used for ATP formation. It consists of a core antenna complex that captures photons, and an electron transfer chain that converts photonic excitation into a charge separation. The protein is Photosystem II reaction center protein J of Synechococcus sp. (strain RCC307).